Reading from the N-terminus, the 132-residue chain is Agouti-signaling protein (132 aa).

The N-terminal stretch at 1–22 (MDVTRLLLATLLVFLCFFTAYS) is a signal peptide. An N-linked (GlcNAc...) asparagine glycan is attached at Asn-39. The segment at 61-87 (QISRKEAEKKRSSKKEASMKKVARPRT) is disordered. Residues 63 to 79 (SRKEAEKKRSSKKEASM) show a composition bias toward basic and acidic residues. 5 disulfides stabilise this stretch: Cys-93–Cys-108, Cys-100–Cys-114, Cys-107–Cys-125, Cys-111–Cys-132, and Cys-116–Cys-123. The 40-residue stretch at 93–132 (CVTTRDSCKPPAPACCDPCASCQCRFFRSACSCRVLSLNC) folds into the Agouti domain.

The protein resides in the secreted. Its function is as follows. Involved in the regulation of melanogenesis. The binding of ASP to MC1R precludes alpha-MSH initiated signaling and thus blocks production of cAMP, leading to a down-regulation of eumelanogenesis (brown/black pigment) and thus increasing synthesis of pheomelanin (yellow/red pigment). In Macaca silenus (Lion-tailed macaque), this protein is Agouti-signaling protein (ASIP).